We begin with the raw amino-acid sequence, 118 residues long: Eukaryotic translation initiation factor 4E-binding protein 1 (118 aa).

2 stretches are compositionally biased toward polar residues: residues 1 to 12 (MSGGSSCSQTPS) and 34 to 48 (YSTT…TTPG). 2 disordered regions span residues 1–20 (MSGG…ATRR) and 25–48 (DGVQ…TTPG). Serine 2 is modified (N-acetylserine). Threonine 37 carries the post-translational modification Phosphothreonine; by MTOR. Threonine 41 carries the post-translational modification Phosphothreonine. Phosphoserine is present on serine 44. Threonine 46 carries the phosphothreonine; by MTOR modification. Position 50 is a phosphothreonine (threonine 50). Tyrosine 54 carries the phosphotyrosine modification. The YXXXXLphi motif motif lies at 54-60 (YDRKFLM). Lysine 57 participates in a covalent cross-link: Glycyl lysine isopeptide (Lys-Gly) (interchain with G-Cter in ubiquitin). The interval 64-118 (NSPVTKTPPRDLPTIPGVTSPSSDEPPMEASQSHLRNSPEDKRAGGEESQFEMDI) is disordered. Serine 65 carries the post-translational modification Phosphoserine; by DYRK2, MAPK1, MAPK3 and MTOR. Threonine 70 carries the phosphothreonine; by MTOR modification. The residue at position 77 (threonine 77) is a Phosphothreonine. A phosphoserine mark is found at serine 83 and serine 96. The span at 100–109 (NSPEDKRAGG) shows a compositional bias: basic and acidic residues. A Phosphoserine; by DYRK2 modification is found at serine 101. At serine 112 the chain carries Phosphoserine. The TOS motif motif lies at 114 to 118 (FEMDI).

It belongs to the eIF4E-binding protein family. Hypophosphorylated EIF4EBP1 competes with EIF4G1/EIF4G3 to interact with EIF4E; insulin stimulated MAP-kinase (MAPK1 and MAPK3) or mTORC1 phosphorylation of EIF4EBP1 causes dissociation of the complex allowing EIF4G1/EIF4G3 to bind and consequent initiation of translation. Interacts (via TOS motif) with RPTOR; promoting phosphorylation by mTORC1. In terms of processing, phosphorylated on serine and threonine residues in response to insulin, EGF and PDGF. Phosphorylation at Thr-37, Thr-46, Ser-65 and Thr-70, corresponding to the hyperphosphorylated form, is regulated by mTORC1 and abolishes binding to EIF4E. Ubiquitinated: when eIF4E levels are low, hypophosphorylated form is ubiquitinated by the BCR(KLHL25) complex, leading to its degradation and serving as a homeostatic mechanism to maintain translation and prevent eIF4E inhibition when eIF4E levels are low. Not ubiquitinated when hyperphosphorylated (at Thr-37, Thr-46, Ser-65 and Thr-70) or associated with eIF4E.

Its subcellular location is the cytoplasm. The protein localises to the nucleus. Its function is as follows. Repressor of translation initiation that regulates EIF4E activity by preventing its assembly into the eIF4F complex: hypophosphorylated form competes with EIF4G1/EIF4G3 and strongly binds to EIF4E, leading to repress translation. In contrast, hyperphosphorylated form dissociates from EIF4E, allowing interaction between EIF4G1/EIF4G3 and EIF4E, leading to initiation of translation. Mediates the regulation of protein translation by hormones, growth factors and other stimuli that signal through the MAP kinase and mTORC1 pathways. In Homo sapiens (Human), this protein is Eukaryotic translation initiation factor 4E-binding protein 1 (EIF4EBP1).